The following is a 201-amino-acid chain: 3-isopropylmalate dehydratase small subunit (201 aa).

The protein belongs to the LeuD family. LeuD type 1 subfamily. As to quaternary structure, heterodimer of LeuC and LeuD.

It carries out the reaction (2R,3S)-3-isopropylmalate = (2S)-2-isopropylmalate. It participates in amino-acid biosynthesis; L-leucine biosynthesis; L-leucine from 3-methyl-2-oxobutanoate: step 2/4. Its function is as follows. Catalyzes the isomerization between 2-isopropylmalate and 3-isopropylmalate, via the formation of 2-isopropylmaleate. This Paracoccus denitrificans (strain Pd 1222) protein is 3-isopropylmalate dehydratase small subunit.